A 574-amino-acid chain; its full sequence is Putative thiamine pyrophosphate-containing protein YdaP (574 aa).

Positions aspartate 28–alanine 55 form a coiled coil. Position 52 (glutamate 52) interacts with thiamine diphosphate. FAD-binding positions include isoleucine 256–serine 277 and aspartate 294–aspartate 313. The interval threonine 384–asparagine 464 is thiamine pyrophosphate binding. Mg(2+)-binding residues include aspartate 435 and asparagine 462.

The protein belongs to the TPP enzyme family. Mg(2+) serves as cofactor. Thiamine diphosphate is required as a cofactor.

The chain is Putative thiamine pyrophosphate-containing protein YdaP (ydaP) from Bacillus subtilis (strain 168).